Here is a 637-residue protein sequence, read N- to C-terminus: 1-deoxy-D-xylulose-5-phosphate synthase (637 aa).

Thiamine diphosphate-binding positions include His76 and 117-119 (GHS). Position 148 (Asp148) interacts with Mg(2+). Thiamine diphosphate-binding positions include 149–150 (GA), Asn177, Tyr294, and Glu381. Asn177 provides a ligand contact to Mg(2+).

The protein belongs to the transketolase family. DXPS subfamily. Homodimer. The cofactor is Mg(2+). Requires thiamine diphosphate as cofactor.

It catalyses the reaction D-glyceraldehyde 3-phosphate + pyruvate + H(+) = 1-deoxy-D-xylulose 5-phosphate + CO2. The protein operates within metabolic intermediate biosynthesis; 1-deoxy-D-xylulose 5-phosphate biosynthesis; 1-deoxy-D-xylulose 5-phosphate from D-glyceraldehyde 3-phosphate and pyruvate: step 1/1. In terms of biological role, catalyzes the acyloin condensation reaction between C atoms 2 and 3 of pyruvate and glyceraldehyde 3-phosphate to yield 1-deoxy-D-xylulose-5-phosphate (DXP). The chain is 1-deoxy-D-xylulose-5-phosphate synthase from Neisseria meningitidis serogroup B (strain ATCC BAA-335 / MC58).